We begin with the raw amino-acid sequence, 266 residues long: MASVASSTTLISSPSSRVFPAKSSLSSPSVSFLRTLSSPSASASLRSGFARRSSLSSTSRRSFAVKAQADDLPLVGNKAPDFEAEAVFDQEFIKVKLSDYIGKKYVILFFYPLDFTFVCPTEITAFSDRHSEFEKLNTEVLGVSVDSVFSHLAWVQTDRKSGGLGDLNYPLISDVTKSISKSFGVLIHDQGIALRGLFIIDKEGVIQHSTINNLGIGRSVDETMRTLQALQYIQENPDEVCPAGWKPGEKSMKPDPKLSKEYFSAI.

Low complexity predominate over residues 1–16; the sequence is MASVASSTTLISSPSS. The segment at 1 to 25 is disordered; it reads MASVASSTTLISSPSSRVFPAKSSL. Residues 1–65 constitute a chloroplast transit peptide; that stretch reads MASVASSTTL…SSTSRRSFAV (65 aa). Residues 73-232 form the Thioredoxin domain; that stretch reads PLVGNKAPDF…TMRTLQALQY (160 aa). Cysteine 119 functions as the Cysteine sulfenic acid (-SOH) intermediate in the catalytic mechanism.

This sequence belongs to the peroxiredoxin family. AhpC/Prx1 subfamily. Homodimer; disulfide-linked, upon oxidation. Interacts with the plastidial thioredoxin CDSP32. Interacts with the plastidial NADPH-dependent thioredoxin reductase ANTR-C.

The protein localises to the plastid. It is found in the chloroplast. The enzyme catalyses a hydroperoxide + [thioredoxin]-dithiol = an alcohol + [thioredoxin]-disulfide + H2O. In terms of biological role, thiol-specific peroxidase that catalyzes the reduction of hydrogen peroxide and organic hydroperoxides to water and alcohols, respectively. Plays a role in cell protection against oxidative stress by detoxifying peroxides. May be an antioxidant enzyme particularly in the developing shoot and photosynthesizing leaf. The polypeptide is 2-Cys peroxiredoxin BAS1, chloroplastic (BAS1) (Arabidopsis thaliana (Mouse-ear cress)).